The primary structure comprises 438 residues: Porin AaxA (438 aa).

Residues 1 to 21 (MISFRFLLLSGLCALGISSYA) form the signal peptide.

Belongs to the OprB family.

The protein resides in the cell outer membrane. Its function is as follows. Facilitates L-arginine uptake, as part of the AaxABC system. The arginine uptake by the bacterium in the macrophage may be a virulence factor against the host innate immune response. The sequence is that of Porin AaxA (aaxA) from Chlamydia pneumoniae (Chlamydophila pneumoniae).